A 256-amino-acid chain; its full sequence is MITIDRRVQTKCSVLGRHKQVFIDMNETVHHQGSFFGRRKGHKLRAHQADLVDNLLPHLALDIELPAPDALAELFDAPVEAVRLEIGFGGGEHLIAEALAHPEIGFIGAEPYVNGMAKILARIEDQNIRNVRLFAGDAAELMAWLPARALKRIDLIHPDPWPKRRHWKRRFVQDSMIGAMARALIDGGEFRFVSDIDSYNAWTLAHLLRAPEFDWTAERADDWRKPWSGYTMTRYGRKAEREGRRASYLRFRRIAA.

Positions 85, 110, 137, and 159 each coordinate S-adenosyl-L-methionine. Residue Asp-159 is part of the active site. Substrate is bound by residues Lys-163 and Asp-195.

The protein belongs to the class I-like SAM-binding methyltransferase superfamily. TrmB family.

It catalyses the reaction guanosine(46) in tRNA + S-adenosyl-L-methionine = N(7)-methylguanosine(46) in tRNA + S-adenosyl-L-homocysteine. It participates in tRNA modification; N(7)-methylguanine-tRNA biosynthesis. Catalyzes the formation of N(7)-methylguanine at position 46 (m7G46) in tRNA. The sequence is that of tRNA (guanine-N(7)-)-methyltransferase from Rhodopseudomonas palustris (strain BisB5).